Consider the following 344-residue polypeptide: AP2/ERF and B3 domain-containing transcription factor RAV1 (344 aa).

Residues Met-1–Ser-15 are compositionally biased toward low complexity. The disordered stretch occupies residues Met-1–Ile-22. Positions Lys-61–Lys-116 form a DNA-binding region, AP2/ERF. Residues Glu-148–Ser-169 form a disordered region. Residues Phe-188–Ser-292 constitute a DNA-binding region (TF-B3).

This sequence belongs to the AP2/ERF transcription factor family. RAV subfamily. Monomer. As to expression, expressed in all tissues examined: Roots, rosette leaves, cauline leaves, inflorescence stems, flowers and siliques. Highest expression in roots and rosette leaves. Very low expression in flowers.

Its subcellular location is the nucleus. Its function is as follows. Binds specifically to bipartite recognition sequences composed of two unrelated motifs, 5'-CAACA-3' and 5'-CACCTG-3'. May function as negative regulator of plant growth and development. In Arabidopsis thaliana (Mouse-ear cress), this protein is AP2/ERF and B3 domain-containing transcription factor RAV1 (RAV1).